A 477-amino-acid chain; its full sequence is Aspartyl/glutamyl-tRNA(Asn/Gln) amidotransferase subunit B (477 aa).

This sequence belongs to the GatB/GatE family. GatB subfamily. In terms of assembly, heterotrimer of A, B and C subunits.

It catalyses the reaction L-glutamyl-tRNA(Gln) + L-glutamine + ATP + H2O = L-glutaminyl-tRNA(Gln) + L-glutamate + ADP + phosphate + H(+). The enzyme catalyses L-aspartyl-tRNA(Asn) + L-glutamine + ATP + H2O = L-asparaginyl-tRNA(Asn) + L-glutamate + ADP + phosphate + 2 H(+). Its function is as follows. Allows the formation of correctly charged Asn-tRNA(Asn) or Gln-tRNA(Gln) through the transamidation of misacylated Asp-tRNA(Asn) or Glu-tRNA(Gln) in organisms which lack either or both of asparaginyl-tRNA or glutaminyl-tRNA synthetases. The reaction takes place in the presence of glutamine and ATP through an activated phospho-Asp-tRNA(Asn) or phospho-Glu-tRNA(Gln). This chain is Aspartyl/glutamyl-tRNA(Asn/Gln) amidotransferase subunit B, found in Ureaplasma urealyticum serovar 10 (strain ATCC 33699 / Western).